We begin with the raw amino-acid sequence, 225 residues long: Ribose-5-phosphate isomerase A (225 aa).

Substrate contacts are provided by residues 27–30, 80–83, and 93–96; these read SGST, DGAD, and KGGG. The Proton acceptor role is filled by glutamate 102. Position 120 (lysine 120) interacts with substrate.

This sequence belongs to the ribose 5-phosphate isomerase family. In terms of assembly, homodimer.

It catalyses the reaction aldehydo-D-ribose 5-phosphate = D-ribulose 5-phosphate. Its pathway is carbohydrate degradation; pentose phosphate pathway; D-ribose 5-phosphate from D-ribulose 5-phosphate (non-oxidative stage): step 1/1. Functionally, catalyzes the reversible conversion of ribose-5-phosphate to ribulose 5-phosphate. The chain is Ribose-5-phosphate isomerase A from Korarchaeum cryptofilum (strain OPF8).